A 267-amino-acid polypeptide reads, in one-letter code: Imidazole glycerol phosphate synthase subunit HisF (267 aa).

Catalysis depends on residues D22 and D141.

The protein belongs to the HisA/HisF family. In terms of assembly, heterodimer of HisH and HisF.

Its subcellular location is the cytoplasm. The catalysed reaction is 5-[(5-phospho-1-deoxy-D-ribulos-1-ylimino)methylamino]-1-(5-phospho-beta-D-ribosyl)imidazole-4-carboxamide + L-glutamine = D-erythro-1-(imidazol-4-yl)glycerol 3-phosphate + 5-amino-1-(5-phospho-beta-D-ribosyl)imidazole-4-carboxamide + L-glutamate + H(+). Its pathway is amino-acid biosynthesis; L-histidine biosynthesis; L-histidine from 5-phospho-alpha-D-ribose 1-diphosphate: step 5/9. In terms of biological role, IGPS catalyzes the conversion of PRFAR and glutamine to IGP, AICAR and glutamate. The HisF subunit catalyzes the cyclization activity that produces IGP and AICAR from PRFAR using the ammonia provided by the HisH subunit. The chain is Imidazole glycerol phosphate synthase subunit HisF from Mycobacterium tuberculosis (strain ATCC 25177 / H37Ra).